Reading from the N-terminus, the 744-residue chain is Leucine-rich repeat extensin-like protein 1 (744 aa).

The N-terminal stretch at 1–26 is a signal peptide; the sequence is MLFPPLRSLFLFTLLLSSVCFLQIKA. 2 N-linked (GlcNAc...) asparagine glycosylation sites follow: Asn71 and Asn77. 9 LRR repeats span residues 122-145, 147-170, 171-194, 196-217, 219-240, 241-265, 266-289, 290-313, and 315-336; these read LSDL…TFNR, KLLY…VLSL, PSLK…LFDR, LDAI…MGNS, VSAL…IGQM, GKTL…IGNL, KKVT…VGNM, KSLE…ICQL, and NLEN…CAAS. N-linked (GlcNAc...) asparagine glycosylation occurs at Asn253. N-linked (GlcNAc...) asparagine glycans are attached at residues Asn318 and Asn344. The LRR 10 repeat unit spans residues 381 to 404; the sequence is FSPPPPTFKMSPEVRTLPPPIYVY. Positions 382-744 are contains the Ser-Pro(4) repeats; the sequence is SPPPPTFKMS…ASPPPPPSYY (363 aa). 4 disordered regions span residues 408 to 445, 518 to 537, 555 to 576, and 658 to 744; these read PPPP…PPPP, VYSS…PESS, PSPV…VYYP, and PPPS…PSYY. Residues 430–439 are compositionally biased toward low complexity; sequence SKMSPSVRAY. Residues 704 to 729 are compositionally biased toward pro residues; the sequence is YEPPPEYSYSSSPPPPSPTSYFPPMP.

In terms of processing, hydroxylated on proline residues in the S-P-P-P-P repeat. Post-translationally, O-glycosylated on hydroxyprolines. Expressed in root hair cells (at protein level).

The protein localises to the secreted. The protein resides in the cell wall. Functionally, modulates cell morphogenesis by regulating cell wall formation and assembly, and/or growth polarization. Together with LRX2, component of the extracellular mechanism regulating root hair morphogenesis and elongation. In Arabidopsis thaliana (Mouse-ear cress), this protein is Leucine-rich repeat extensin-like protein 1 (LRX1).